The chain runs to 215 residues: MESSRGKPGLNGSGGGAAAFDYSSRRGYYTGAGAALPPLAAGSRAPPVDPCCVALRVFVLLGTLASAVVMAADRQSTTVQIAAGEQLAPPLRVPVTAKWTYSSAFVYFVVANAMVFAFSAAALAAVRRRSAVVPVMVGDLVAMALLFSAVGAAAQFGLLGERGNAHVRWAKVCDVYGPFCERAMAAVVVALIAAFADLVLLMLTILTIHKASSYY.

Over M1–C51 the chain is Cytoplasmic. The chain crosses the membrane as a helical span at residues C52 to A72. Residues D73–S103 are Extracellular-facing. A helical transmembrane segment spans residues A104–A124. The Cytoplasmic segment spans residues A125–S130. A helical membrane pass occupies residues A131–G151. Topologically, residues A152 to A185 are extracellular. The chain crosses the membrane as a helical span at residues A186–L206. Residues T207–Y215 lie on the Cytoplasmic side of the membrane.

The protein belongs to the Casparian strip membrane proteins (CASP) family. In terms of assembly, homodimer and heterodimers.

Its subcellular location is the cell membrane. This is CASP-like protein 1E1 from Oryza sativa subsp. indica (Rice).